We begin with the raw amino-acid sequence, 498 residues long: Delta(14)-sterol reductase erg24A (498 aa).

The next 4 membrane-spanning stretches (helical) occupy residues 30–50 (LGAF…TFLC), 91–111 (VTVW…FLPG), 136–156 (ILIL…FVVW), and 163–183 (YVQI…FVYA). Asn-257 carries an N-linked (GlcNAc...) asparagine glycan. The next 3 membrane-spanning stretches (helical) occupy residues 275-295 (IVLS…MEPA), 302-322 (VIMD…VPFI), and 339-359 (LREI…FRGA). Residues Lys-363, Arg-367, Trp-395, and 402-403 (NY) each bind NADP(+). N-linked (GlcNAc...) asparagine glycosylation occurs at Asn-429. Residues 444 to 464 (VRGWGMIFTYFFLVYFGALLI) form a helical membrane-spanning segment. NADP(+) is bound by residues Asp-470, 474 to 478 (CKSKY), and Tyr-485.

This sequence belongs to the ERG4/ERG24 family.

The protein resides in the endoplasmic reticulum membrane. It functions in the pathway steroid metabolism; ergosterol biosynthesis. Functionally, delta(14)-sterol reductase; part of the third module of ergosterol biosynthesis pathway that includes the late steps of the pathway. Catalyzes the reduction of the C14=C15 double bond within 4,4,24-trimethyl ergosta-8,14,24(28)-trienolto produce 4,4-dimethylfecosterol. The third module or late pathway involves the ergosterol synthesis itself through consecutive reactions that mainly occur in the endoplasmic reticulum (ER) membrane. Firstly, the squalene synthase erg9 catalyzes the condensation of 2 farnesyl pyrophosphate moieties to form squalene, which is the precursor of all steroids. Squalene synthase is crucial for balancing the incorporation of farnesyl diphosphate (FPP) into sterol and nonsterol isoprene synthesis. Secondly, squalene is converted into lanosterol by the consecutive action of the squalene epoxidase erg1 and the lanosterol synthase erg7. Then, the delta(24)-sterol C-methyltransferase erg6 methylates lanosterol at C-24 to produce eburicol. Eburicol is the substrate of the sterol 14-alpha demethylase encoded by cyp51A and cyp51B, to yield 4,4,24-trimethyl ergosta-8,14,24(28)-trienol. The C-14 reductase erg24 then reduces the C14=C15 double bond which leads to 4,4-dimethylfecosterol. A sequence of further demethylations at C-4, involving the C-4 demethylation complex containing the C-4 methylsterol oxidases erg25A or erg25B, the sterol-4-alpha-carboxylate 3-dehydrogenase erg26 and the 3-keto-steroid reductase erg27, leads to the production of fecosterol via 4-methylfecosterol. The C-8 sterol isomerase erg2 then catalyzes the reaction which results in unsaturation at C-7 in the B ring of sterols and thus converts fecosterol to episterol. The sterol-C5-desaturase erg3B then catalyzes the introduction of a C-5 double bond in the B ring to produce 5-dehydroepisterol. The 2 other sterol-C5-desaturases, erg3A and erg3C, seem to be less important in ergosterol biosynthesis. The C-22 sterol desaturase erg5 further converts 5-dehydroepisterol into ergosta-5,7,22,24(28)-tetraen-3beta-ol by forming the C-22(23) double bond in the sterol side chain. Finally, ergosta-5,7,22,24(28)-tetraen-3beta-ol is substrate of the C-24(28) sterol reductases erg4A and erg4B to produce ergosterol. Possible alternative sterol biosynthetic pathways might exist from fecosterol to ergosterol, depending on the activities of the erg3 isoforms. The sequence is that of Delta(14)-sterol reductase erg24A from Aspergillus fumigatus (strain ATCC MYA-4609 / CBS 101355 / FGSC A1100 / Af293) (Neosartorya fumigata).